The chain runs to 64 residues: Large ribosomal subunit protein bL33c (64 aa).

This sequence belongs to the bacterial ribosomal protein bL33 family.

Its subcellular location is the plastid. It is found in the chloroplast. The polypeptide is Large ribosomal subunit protein bL33c (Huperzia lucidula (Shining clubmoss)).